Consider the following 99-residue polypeptide: MSTLTKSDMIEHLMNHLNLTRQEGRCLVENFFDELSESLIDGKEVKLSGFGNFELKDKNSRPGRNPKTGEPVAVSARRVVTFKTGQKFRQQVDERLFDQ.

Belongs to the bacterial histone-like protein family. Heterodimer of an alpha and a beta chain.

In terms of biological role, this protein is one of the two subunits of integration host factor, a specific DNA-binding protein that functions in genetic recombination as well as in transcriptional and translational control. The polypeptide is Integration host factor subunit alpha (Psychrobacter cryohalolentis (strain ATCC BAA-1226 / DSM 17306 / VKM B-2378 / K5)).